The following is a 501-amino-acid chain: Endosomal/lysosomal proton channel TMEM175 (501 aa).

Residues 1 to 20 (MAAPRAATPGPGGGARKPEL) form a disordered region. Over 1–31 (MAAPRAATPGPGGGARKPELDLELGSSTQTS) the chain is Cytoplasmic. The chain crosses the membrane as a helical span at residues 32 to 54 (HRLLAYSDALLSIIATVMILPVA). The short motif at 33–39 (RLLAYSD) is the RxxxFSD motif 1 element. The Lumenal portion of the chain corresponds to 55 to 75 (HTKIHPDQKLGESVQQLLLTK). The short helix H1-1 stretch occupies residues 56–61 (TKIHPD). Positions 63–69 (KLGESVQ) are short helix H2-1. The chain crosses the membrane as a helical span at residues 76–98 (IAVYLMTFLIVTVAWAAHVRLFQ). The Cytoplasmic portion of the chain corresponds to 99-104 (VIELID). A helical transmembrane segment spans residues 105–126 (DVLALLNLACMMIITFLPYTFS). Residues 127 to 136 (LMASFPGVPF) lie on the Lumenal side of the membrane. Residues 137–158 (GIFLFSVCAVVIGLIQAVIVVY) form a helical membrane-spanning segment. Over 159 to 182 (GFYHPHLLNQQIQVSENQNFYKRH) the chain is Cytoplasmic. Residues 183-203 (ILKIILRGPALCFLAAIFSFF) traverse the membrane as a helical segment. The Lumenal segment spans residues 204 to 208 (FIPLS). A helical membrane pass occupies residues 209-228 (YLLLGLVIVFPHLSRFITWC). At 229–257 (KTKIVGHRDEEEASYSLETFSFYLSEPLS) the chain is on the cytoplasmic side. The chain crosses the membrane as a helical span at residues 258 to 282 (KERVEAFSDGVYAIVATLLILDICE). The short motif at 260-266 (RVEAFSD) is the RxxxFSD motif 2 element. Residues 283–309 (DNVPDPREVGEKFHGSLLEALSEYGPN) are Lumenal-facing. The tract at residues 288-296 (PREVGEKFH) is short helix H1-2. Residues 298–304 (SLLEALS) are short helix H2-2. A helical membrane pass occupies residues 310–332 (YLAYFGSFVTIGLLWFVHHSLFL). Topologically, residues 333 to 338 (YVTKAT) are cytoplasmic. The chain crosses the membrane as a helical span at residues 339 to 360 (RLMGLLNILSLAFIGGLPLAYQ). The Lumenal portion of the chain corresponds to 361–375 (LTSEFAEKSHNEIEA). Residues 376–396 (IQVSCVITFFASIFQFAIWTT) traverse the membrane as a helical segment. Over 397 to 416 (ALLHERETLHPFARYGGKEH) the chain is Cytoplasmic. The helical transmembrane segment at 417–440 (AFMFAKLALYPCVSLGAFFLTCLL) threads the bilayer. At 441-442 (SE) the chain is on the lumenal side. A helical membrane pass occupies residues 443–469 (FSTEIFHLMQIVIPFAFLALRIFVRIS). The Cytoplasmic segment spans residues 470 to 501 (LTVIKSVMSLSRRKVVLLEEEEACLSPTETHS).

This sequence belongs to the TMEM175 family. In terms of assembly, homodimer.

The protein resides in the endosome membrane. The protein localises to the lysosome membrane. The enzyme catalyses H(+)(in) = H(+)(out). The catalysed reaction is K(+)(in) = K(+)(out). With respect to regulation, active at low pH (under pH 4.6): proton channel activity is activated by luminal side protons. Polyunsaturated fatty acids, such as arachidonic acid, also activate the channel activity. Functionally, proton-activated proton channel that catalyzes proton efflux from endosomes and lysosomes to maintain a steady-state pH. Activated at low pH (under pH 4.6) by luminal side protons: selectively mediates lysosomal proton release from lysosomes, eliciting a proton leak that balances V-ATPase activity to maintain pH homeostasis. Regulation of lumenal pH stability is required for autophagosome-lysosome fusion. Also acts as a potassium channel at higher pH, regulating potassium conductance in endosomes and lysosomes. This chain is Endosomal/lysosomal proton channel TMEM175, found in Gallus gallus (Chicken).